Here is a 342-residue protein sequence, read N- to C-terminus: NADH-quinone oxidoreductase subunit H 1 (342 aa).

The next 8 helical transmembrane spans lie at 7 to 27, 78 to 98, 120 to 140, 166 to 186, 193 to 213, 245 to 265, 284 to 304, and 322 to 342; these read FLLEKTIIVTAVFTISLVIAM, ALFILGPSIAMMTACLTGAVI, IGVLYIFAVVSIGVYGVMIGG, MGLSIIALVMTTGTLSIGEIV, WWNIVYQPLGFFIFMVCSFAE, LFAEYINMFISSAVMSAFYFG, ILGTLFFFTKIVLFIFLFMWV, and KIMIPMAIINIIITGACILLF.

The protein belongs to the complex I subunit 1 family. As to quaternary structure, NDH-1 is composed of 14 different subunits. Subunits NuoA, H, J, K, L, M, N constitute the membrane sector of the complex.

Its subcellular location is the cell inner membrane. The enzyme catalyses a quinone + NADH + 5 H(+)(in) = a quinol + NAD(+) + 4 H(+)(out). Its function is as follows. NDH-1 shuttles electrons from NADH, via FMN and iron-sulfur (Fe-S) centers, to quinones in the respiratory chain. The immediate electron acceptor for the enzyme in this species is believed to be ubiquinone. Couples the redox reaction to proton translocation (for every two electrons transferred, four hydrogen ions are translocated across the cytoplasmic membrane), and thus conserves the redox energy in a proton gradient. This subunit may bind ubiquinone. This Cytophaga hutchinsonii (strain ATCC 33406 / DSM 1761 / CIP 103989 / NBRC 15051 / NCIMB 9469 / D465) protein is NADH-quinone oxidoreductase subunit H 1.